Consider the following 417-residue polypeptide: MKVLVVGGGGREHAIVHKLSQSDRVEKIYCAPGNAGIGQLAECVNISVEEIEKLKEFALQNKIDITIVGPELPLVEGIVDEFERTGLKIFGPSKKAAMIEGSKYFAKQIMAKYEIPTGRFKAFDRYQEALKFLKETWYPVVIKADGLAQGKGVFIVRDFIEAKEVLDLMMKKRVFGPSGDIVIVEEMLYGKEASIFAFVDGENVLTMMTAMDYKKVYEKDEGPNTGGMGSIAPNPHIDKKTLNEIEEKILKPVVYALKKEGIVYKGVLYAGLMLTKEGPKVLEFNARFGDPETQAILPLLKTDFLEIIEATLEGKLKNLKLEWEDKKAVCVIAASKGYPGEYKKGFEIRGLEEVKEAFVYHAGTSFKDGKIVTSGGRVFGIVALGDSYKEAREIAYREIEKISFEGIYYRKDIAAGY.

The ATP-grasp domain maps to 107-313 (KQIMAKYEIP…FLEIIEATLE (207 aa)). Residue 133-194 (LKETWYPVVI…EEMLYGKEAS (62 aa)) participates in ATP binding. Positions 283 and 285 each coordinate Mg(2+).

This sequence belongs to the GARS family. Requires Mg(2+) as cofactor. Mn(2+) is required as a cofactor.

The enzyme catalyses 5-phospho-beta-D-ribosylamine + glycine + ATP = N(1)-(5-phospho-beta-D-ribosyl)glycinamide + ADP + phosphate + H(+). Its pathway is purine metabolism; IMP biosynthesis via de novo pathway; N(1)-(5-phospho-D-ribosyl)glycinamide from 5-phospho-alpha-D-ribose 1-diphosphate: step 2/2. The chain is Phosphoribosylamine--glycine ligase from Caldanaerobacter subterraneus subsp. tengcongensis (strain DSM 15242 / JCM 11007 / NBRC 100824 / MB4) (Thermoanaerobacter tengcongensis).